Here is a 231-residue protein sequence, read N- to C-terminus: Uridylate cyclase (231 aa).

The Guanylate cyclase domain occupies 46–178 (TVLYADLDGS…RAANYAAKLT (133 aa)). Y49 contributes to the a ribonucleoside 5'-triphosphate binding site. The Mn(2+) site is built by D51 and D95. R96 contributes to the a ribonucleoside 5'-triphosphate binding site.

The protein belongs to the adenylyl cyclase class-4/guanylyl cyclase family. Pyrimidine cyclase subfamily. As to quaternary structure, homodimer. The cofactor is Mn(2+).

It localises to the cytoplasm. It carries out the reaction UTP = 3',5'-cyclic UMP + diphosphate. Pycsar (pyrimidine cyclase system for antiphage resistance) provides immunity against bacteriophage. The pyrimidine cyclase (PycC) synthesizes cyclic nucleotides in response to infection; these serve as specific second messenger signals. The signal activates the adjacent effector, leading to bacterial cell death and abortive phage infection. A clade B Pycsar system. Functionally, the pyrimidine cyclase gene of a two-gene Pycsar system, generates cyclic UMP (cUMP) from UTP probably in response to bacteriophage infection. Expression of this and adjacent effector XpPycTIR (AC P0DV29) confers resistance to bacteriophage T7. When cells expressing the Pycsar system are infected phage T7 at low multiplicity of infection (0.2 MOI) the culture survives, at 2.0 MOI bacteria enter growth arrest. The same cells enter growth arrest after exposure to 2.5 mM cUMP but not cCMP; the effector protein responds only to the cUMP produced by its cognate NTP cyclase. This Xanthomonas perforans protein is Uridylate cyclase.